Reading from the N-terminus, the 50-residue chain is uncharacterized protein (50 aa).

Residues 28–50 (SKLSPVTNGGKTIGKSNKVSKND) form a disordered region. Residues 29 to 50 (KLSPVTNGGKTIGKSNKVSKND) are compositionally biased toward polar residues.

This is an uncharacterized protein from Haemophilus influenzae (strain ATCC 51907 / DSM 11121 / KW20 / Rd).